The primary structure comprises 155 residues: FHA domain-containing protein FhaB (155 aa).

A helical membrane pass occupies residues 6-28 (LQLTRVGFLLLLWLFIWSVLRIL). A Phosphothreonine modification is found at Thr36. In terms of domain architecture, FHA spans 83-132 (VLIGRADDSTLVLTDDYASTRHARLSPRGSEWYVEDLGSTNGTYLDRAKV).

In terms of processing, phosphorylated by PknB. Dephosphorylated by PstP.

The protein resides in the cell membrane. This Mycolicibacterium smegmatis (strain ATCC 700084 / mc(2)155) (Mycobacterium smegmatis) protein is FHA domain-containing protein FhaB (fhaB).